Here is a 476-residue protein sequence, read N- to C-terminus: Lactate utilization protein B (476 aa).

4Fe-4S ferredoxin-type domains lie at 304–334 (GTEF…GHSY) and 353–382 (YDDY…LHEL). Residues Cys-313, Cys-316, Cys-319, Cys-323, Cys-366, Cys-369, and Cys-373 each contribute to the [4Fe-4S] cluster site. Residues 440–476 (KGPGPLKAWTESREFPAPSKERFRDWFQTRQKGGNPS) form a disordered region. Positions 449–466 (TESREFPAPSKERFRDWF) are enriched in basic and acidic residues. Residues 467–476 (QTRQKGGNPS) are compositionally biased toward polar residues.

The protein belongs to the LutB/YkgF family.

Is involved in L-lactate degradation and allows cells to grow with lactate as the sole carbon source. Has probably a role as an electron transporter during oxidation of L-lactate. This chain is Lactate utilization protein B, found in Geobacillus kaustophilus (strain HTA426).